The sequence spans 111 residues: MLVSMLLIIFPNGVSLSTPSLSSRNKFILRSRSSRLRFSARSFLSSASRLVNSSKMTLAFERLLRLRRVSFTKKFSSSDEDKSRDVRRRLRPASEATGAFAVRGADCAIAD.

An N-terminal signal peptide occupies residues 1 to 16; sequence MLVSMLLIIFPNGVSL. An N-linked (GlcNAc...) asparagine glycan is attached at Asn52. The segment at 73-92 is disordered; sequence KKFSSSDEDKSRDVRRRLRP. The RxLR-dEER motif lies at 88-91; it reads RRLR.

The protein belongs to the RxLR effector family.

It localises to the secreted. The protein localises to the host nucleus. Its subcellular location is the host cytoplasm. Functionally, secreted effector that partially suppresses the host cell death induced by cell death-inducing proteins. This is Secreted RxLR effector protein 81 from Plasmopara viticola (Downy mildew of grapevine).